We begin with the raw amino-acid sequence, 281 residues long: NADPH-dependent 7-cyano-7-deazaguanine reductase (281 aa).

88-90 contacts substrate; sequence IES. Residue 90–91 participates in NADPH binding; that stretch reads SK. Cys-189 functions as the Thioimide intermediate in the catalytic mechanism. Asp-196 acts as the Proton donor in catalysis. 228–229 is a binding site for substrate; it reads HE. 257–258 contacts NADPH; the sequence is RG.

Belongs to the GTP cyclohydrolase I family. QueF type 2 subfamily. In terms of assembly, homodimer.

It localises to the cytoplasm. The enzyme catalyses 7-aminomethyl-7-carbaguanine + 2 NADP(+) = 7-cyano-7-deazaguanine + 2 NADPH + 3 H(+). Its pathway is tRNA modification; tRNA-queuosine biosynthesis. In terms of biological role, catalyzes the NADPH-dependent reduction of 7-cyano-7-deazaguanine (preQ0) to 7-aminomethyl-7-deazaguanine (preQ1). This Erwinia tasmaniensis (strain DSM 17950 / CFBP 7177 / CIP 109463 / NCPPB 4357 / Et1/99) protein is NADPH-dependent 7-cyano-7-deazaguanine reductase.